A 1297-amino-acid chain; its full sequence is MGRSGKLPSGVSAKLKRWKKGHSSDSNPAICRHRQAARSRFFSRPSGRSDLTVDAVKLHNELQSGSLRLGKSEAPETPMEEEAELVLTEKSSGTFLSGLSDCTNVTFSKVQRFWESNSAAHKEICAVLAAVTEVIRSQGGKETETEYFAALMTTMEAVESPESLAAVAYLLNLVLKRVPSPVLIKKFSDTSKAFMDIMSAQASSGSTSVLRWVLSCLATLLRKQDLEAWGYPVTLQVYHGLLSFTVHPKPKIRKAAQHGVCSVLKGSEFMFEKAPAHHPAAISTAKFCIQEIEKSGGSKEATTTLHMLTLLKDLLPCFPEGLVKSCSETLLRVMTLSHVLVTACAMQAFHSLFHARPGLSTLSAELNAQIITALYDYVPSENDLQPLLAWLKVMEKAHINLVRLQWDLGLGHLPRFFGTAVTCLLSPHSQVLTAATQSLKEILKECVAPHMADIGSVTSSASGPAQSVAKMFRAVEEGLTYKFHAAWSSVLQLLCVFFEACGRQAHPVMRKCLQSLCDLRLSPHFPHTAALDQAVGAAVTSMGPEVVLQAVPLEIDGSEETLDFPRSWLLPVIRDHVQETRLGFFTTYFLPLANTLKSKAMDLAQAGSTVESKIYDTLQWQMWTLLPGFCTRPTDVAISFKGLARTLGMAISERPDLRVTVCQALRTLITKGCQAEADRAEVSRFAKNFLPILFNLYGQPVAAGDTPAPRRAVLETIRTYLTITDTQLVNSLLEKASEKVLDPASSDFTRLSVLDLVVALAPCADEAAISKLYSTIRPYLESKAHGVQKKAYRVLEEVCASPQGPGALFVQSHLEDLKKTLLDSLRSTSSPAKRPRLKCLLHIVRKLSAEHKEFITALIPEVILCTKEVSVGARKNAFALLVEMGHAFLRFGSNQEEALQCYLVLIYPGLVGAVTMVSCSILALTHLLFEFKGLMGTSTVEQLLENVCLLLASRTRDVVKSALGFIKVAVTVMDVAHLAKHVQLVMEAIGKLSDDMRRHFRMKLRNLFTKFIRKFGFELVKRLLPEEYHRVLVNIRKAEARAKRHRALSQAAVEEEEEEEEEEEPAQGKGDSIEEILADSEDEEDNEEEERSRGKEQRKLARQRSRAWLKEGGGDEPLNFLDPKVAQRVLATQPGPGRGRKKDHGFKVSADGRLIIREEADGNKMEEEEGAKGEDEEMADPMEDVIIRNKKHQKLKHQKEAEEEELEIPPQYQAGGSGIHRPVAKKAMPGAEYKAKKAKGDVKKKGRPDPYAYIPLNRSKLNRRKKMKLQGQFKGLVKAARRGSQVGHKNRRKDRRP.

The disordered stretch occupies residues 1–29 (MGRSGKLPSGVSAKLKRWKKGHSSDSNPA). S49 and S66 each carry phosphoserine. K71 participates in a covalent cross-link: Glycyl lysine isopeptide (Lys-Gly) (interchain with G-Cter in SUMO1). At S72 the chain carries Phosphoserine. Phosphothreonine occurs at positions 77 and 88. At S97 the chain carries Phosphoserine. A helical transmembrane segment spans residues 903–923 (LVLIYPGLVGAVTMVSCSILA). Disordered regions lie at residues 1047–1101 (ALSQ…RKLA) and 1131–1297 (ATQP…DRRP). S1049 carries the phosphoserine modification. The segment covering 1053–1065 (VEEEEEEEEEEEP) has biased composition (acidic residues). Residues S1072 and S1080 each carry the phosphoserine modification. Residues 1073–1089 (IEEILADSEDEEDNEEE) show a composition bias toward acidic residues. Basic and acidic residues-rich tracts occupy residues 1090–1099 (ERSRGKEQRK) and 1154–1173 (LIIR…GAKG). Over residues 1174–1183 (EDEEMADPME) the composition is skewed to acidic residues. Residues 1188–1197 (RNKKHQKLKH) show a composition bias toward basic residues. Over residues 1233-1243 (YKAKKAKGDVK) the composition is skewed to basic and acidic residues. The span at 1288–1297 (HKNRRKDRRP) shows a compositional bias: basic residues.

Belongs to the RRP12 family. As to expression, weakly expressed. Expressed at intermediate level in testis and ovary.

The protein resides in the nucleus. The protein localises to the nucleolus. Its subcellular location is the nucleus membrane. In Homo sapiens (Human), this protein is RRP12-like protein (RRP12).